Consider the following 3147-residue polypeptide: Bassianolide nonribosomal cyclodepsipeptide synthetase (3147 aa).

A compositionally biased stretch (polar residues) spans 1 to 12 (MEPPNNANTGQL). The segment at 1–23 (MEPPNNANTGQLGPTLPNGTVDL) is disordered. Residues 69–454 (HVVYEIPEDV…INKLQSTDGS (386 aa)) are condensation 1. Residues 495–887 (DDTPNKPAVC…GRMDSQVKIR (393 aa)) are adenylation 1. A Carrier 1 domain is found at 1015-1091 (PDASAGVTKL…SLQAAIGGSS (77 aa)). Serine 1052 is subject to O-(pantetheine 4'-phosphoryl)serine. A condensation 2 region spans residues 1109–1538 (SYSQGRLWFL…QTLISVVPLT (430 aa)). Positions 1567–1973 (FATQVASYPD…GRMDFQFKIR (407 aa)) are adenylation 2. The S-adenosyl-L-methionine-dependent N-methyltransferase (MT) stretch occupies residues 2041–2181 (TYTELDTVSS…FPTRDYLEQV (141 aa)). Carrier domains are found at residues 2515 to 2589 (FPLS…RQQL) and 2615 to 2689 (APTT…EVSQ). An O-(pantetheine 4'-phosphoryl)serine mark is found at serine 2549 and serine 2649. Residues 2735–3139 (QDVYLATHLQ…THLMEQVCNT (405 aa)) are condensation 3.

This sequence belongs to the NRP synthetase family.

Bassianolide nonribosomal synthetase that mediates the biosynthesis of bassianolide (BSL), a non-ribosomal cyclodepsipeptide that shows insecticidal and cancer cell antiproliferative activity. BSLS first catalyzes the iterative synthesis of an enzyme-bound dipeptidol monomer intermediate from D-2-hydroxyisovalerate and L-leucine before performing the condensation and cyclization of 4 dipeptidol monomers to yield the cyclic tetrameric ester bassianolide. The N-methyltransferase MT domain is responsible for the methylation of the leucine residues of bassianolide. BSLS is flexible with both the amino acid and hydroxyl acid precursors, and produces bassianolide as the major product (containing N-methyl-L-Leu), together with small amounts of beauvericin and its analogs beauvericins A-C (containing N-methyl-L-Phe). In Beauveria bassiana (strain ARSEF 2860) (White muscardine disease fungus), this protein is Bassianolide nonribosomal cyclodepsipeptide synthetase.